The sequence spans 274 residues: Rhamnulose-1-phosphate aldolase (274 aa).

E117 is an active-site residue. The Zn(2+) site is built by H141, H143, and H212.

It belongs to the aldolase class II family. RhaD subfamily. As to quaternary structure, homotetramer. Requires Zn(2+) as cofactor.

It localises to the cytoplasm. The enzyme catalyses L-rhamnulose 1-phosphate = (S)-lactaldehyde + dihydroxyacetone phosphate. It functions in the pathway carbohydrate degradation; L-rhamnose degradation; glycerone phosphate from L-rhamnose: step 3/3. Functionally, catalyzes the reversible cleavage of L-rhamnulose-1-phosphate to dihydroxyacetone phosphate (DHAP) and L-lactaldehyde. The polypeptide is Rhamnulose-1-phosphate aldolase (Yersinia pestis).